Reading from the N-terminus, the 508-residue chain is 25-hydroxyvitamin D-1 alpha hydroxylase, mitochondrial (508 aa).

Residue Cys455 participates in heme binding.

This sequence belongs to the cytochrome P450 family. Requires heme as cofactor. In terms of tissue distribution, kidney.

Its subcellular location is the mitochondrion membrane. The enzyme catalyses calcidiol + 2 reduced [adrenodoxin] + O2 + 2 H(+) = calcitriol + 2 oxidized [adrenodoxin] + H2O. It carries out the reaction secalciferol + 2 reduced [adrenodoxin] + O2 + 2 H(+) = calcitetrol + 2 oxidized [adrenodoxin] + H2O. The catalysed reaction is 25-hydroxy-24-oxocalciol + 2 reduced [adrenodoxin] + O2 + 2 H(+) = (1S)-1,25-dihydroxy-24-oxocalciol + 2 oxidized [adrenodoxin] + H2O. It catalyses the reaction 25-hydroxyvitamin D2 + 2 reduced [adrenodoxin] + O2 + 2 H(+) = 1alpha,25-dihydroxyvitamin D2 + 2 oxidized [adrenodoxin] + H2O. The protein operates within hormone biosynthesis; vitamin D biosynthesis. With respect to regulation, activated by cardiolipin and dioleoyl phosphatidylethanolamine (DOPE), phospholipids found in the inner mitochondrial membrane. Inhibited by high substrate concentration. Functionally, a cytochrome P450 monooxygenase involved in vitamin D metabolism and in calcium and phosphorus homeostasis. Catalyzes the rate-limiting step in the activation of vitamin D in the kidney, namely the hydroxylation of 25-hydroxyvitamin D3/calcidiol at the C1alpha-position to form the hormonally active form of vitamin D3, 1alpha,25-dihydroxyvitamin D3/calcitriol that acts via the vitamin D receptor (VDR). Has 1alpha-hydroxylase activity on vitamin D intermediates of the CYP24A1-mediated inactivation pathway. Converts 24R,25-dihydroxyvitamin D3/secalciferol to 1-alpha,24,25-trihydroxyvitamin D3, an active ligand of VDR. Also active on 25-hydroxyvitamin D2. Mechanistically, uses molecular oxygen inserting one oxygen atom into a substrate, and reducing the second into a water molecule, with two electrons provided by NADPH via FDXR/adrenodoxin reductase and FDX1/adrenodoxin. This chain is 25-hydroxyvitamin D-1 alpha hydroxylase, mitochondrial (CYP27B1), found in Homo sapiens (Human).